The chain runs to 487 residues: MEETSPRRRREDEKSVHSTEPKTTSLQKEVGLLSGICIIVGTIIGSGIFISPKSVLANTESVGPCLIIWAACGVLATLGALCFAELGTMITKSGGEYPYLMEAFGPIPAYLFSWTSLIVMKPSSFAIICLSFSEYVCAAFYLGCRPPAVVVKLLAAAAILLITTVNALSVRLGSYVQNVFTAAKLVIVAIIIISGLVLLAQGNVKNFQNSFEGSQTSVGSISLAFYNGLWAYDGWNQLNYITEELRNPYRNLPMAIVIGIPLVTVCYILMNIAYFTVMTPTELLQSQAVAVTFGDRVLYPASWVVPLFVAFSTIGAANGTCFTAGRLIYVAGREGHMLKVLSYISVKRLTPAPALVFYGIIAIIYIIPGDINSLVNYFSFAAWLFYGMTILGLVVMRFTRKDLERPIKVPIFIPIIVILVSVFLILAPIISSPAWEYLYCVLFILSGLIFYFLFVHYKFRWAQKISRPITKHLQMLMEVVPPEKDPE.

The span at 1–20 (MEETSPRRRREDEKSVHSTE) shows a compositional bias: basic and acidic residues. A disordered region spans residues 1 to 23 (MEETSPRRRREDEKSVHSTEPKT). Over 1-31 (MEETSPRRRREDEKSVHSTEPKTTSLQKEVG) the chain is Cytoplasmic. Phosphoserine is present on S18. Residues 32–55 (LLSGICIIVGTIIGSGIFISPKSV) traverse the membrane as a helical segment. Position 43-47 (43-47 (IIGSG)) interacts with L-arginine. Residues 56-62 (LANTESV) are Extracellular-facing. The chain crosses the membrane as a helical span at residues 63-84 (GPCLIIWAACGVLATLGALCFA). Topologically, residues 85–110 (ELGTMITKSGGEYPYLMEAFGPIPAY) are cytoplasmic. Residues 111–137 (LFSWTSLIVMKPSSFAIICLSFSEYVC) form a helical membrane-spanning segment. The Extracellular portion of the chain corresponds to 138–147 (AAFYLGCRPP). The next 2 membrane-spanning stretches (helical) occupy residues 148-169 (AVVV…NALS) and 170-193 (VRLG…IIII). At 194–217 (SGLVLLAQGNVKNFQNSFEGSQTS) the chain is on the extracellular side. A helical transmembrane segment spans residues 218–238 (VGSISLAFYNGLWAYDGWNQL). D233 is an L-arginine binding site. Residues 239–251 (NYITEELRNPYRN) lie on the Cytoplasmic side of the membrane. Residues 252–274 (LPMAIVIGIPLVTVCYILMNIAY) traverse the membrane as a helical segment. Residues 275–302 (FTVMTPTELLQSQAVAVTFGDRVLYPAS) lie on the Extracellular side of the membrane. A helical transmembrane segment spans residues 303 to 325 (WVVPLFVAFSTIGAANGTCFTAG). At 326-351 (RLIYVAGREGHMLKVLSYISVKRLTP) the chain is on the cytoplasmic side. Transmembrane regions (helical) follow at residues 352 to 370 (APAL…IPGD) and 371 to 391 (INSL…MTIL). The Cytoplasmic segment spans residues 392-410 (GLVVMRFTRKDLERPIKVP). Residues 411 to 431 (IFIPIIVILVSVFLILAPIIS) form a helical membrane-spanning segment. The Extracellular segment spans residues 432-434 (SPA). Residues 435 to 450 (WEYLYCVLFILSGLIF) form a helical membrane-spanning segment. The Cytoplasmic segment spans residues 451–487 (YFLFVHYKFRWAQKISRPITKHLQMLMEVVPPEKDPE).

The protein belongs to the amino acid-polyamine-organocation (APC) superfamily. In terms of assembly, disulfide-linked heterodimer composed of the catalytic light chain subunit SLC7A9 and the heavy chain subunit SLC3A1. The heterodimer is the minimal functional unit. Assembles in heterotetramers (dimers of heterodimers) and higher order oligomers; the oligomerization is mediated by SLC3A1 likely to prevent degradation and facilitate heteromer trafficking to the plasma membrane. Interacts with CAV1. Outer medulla of kidney (at protein level). Kidney and small intestine. In the kidney localized to the apical membrane of the proximal tubules.

It is found in the apical cell membrane. It catalyses the reaction L-leucine(out) + L-arginine(in) = L-leucine(in) + L-arginine(out). It carries out the reaction L-histidine(out) + L-arginine(in) = L-histidine(in) + L-arginine(out). The enzyme catalyses L-arginine(in) + L-phenylalanine(out) = L-arginine(out) + L-phenylalanine(in). The catalysed reaction is L-cysteine(out) + L-arginine(in) = L-cysteine(in) + L-arginine(out). It catalyses the reaction L-cystine(out) + L-arginine(in) = L-cystine(in) + L-arginine(out). It carries out the reaction L-lysine(out) + L-arginine(in) = L-lysine(in) + L-arginine(out). Functionally, associates with SLC3A1 to form a functional transporter complex that mediates the electrogenic exchange between cationic amino acids and neutral amino acids, with a stoichiometry of 1:1. Has system b(0,+)-like activity with high affinity for extracellular cationic amino acids and L-cystine and lower affinity for intracellular neutral amino acids. Substrate exchange is driven by high concentration of intracellular neutral amino acids and the intracellular reduction of L-cystine to L-cysteine. Required for reabsorption of L-cystine and dibasic amino acids across the brush border membrane in renal proximal tubules. The sequence is that of b(0,+)-type amino acid transporter 1 (Slc7a9) from Rattus norvegicus (Rat).